Consider the following 471-residue polypeptide: Secretogranin-3 (471 aa).

The first 22 residues, 1–22, serve as a signal peptide directing secretion; it reads MGFLWTGSWILVLVLNSGPIQA. 4 disordered regions span residues 24-73, 92-145, 208-231, and 345-405; these read PKPE…SNFS, KAKQ…HQLD, ANNYEEAPEKPTSRTENQDGKIPE, and KLEK…DEAK. Residues 28–45 show a composition bias toward basic and acidic residues; it reads GSQDKSLHNRELSAERPL. Residue Ser40 is modified to Phosphoserine. Ser40 carries an O-linked (Xyl...) (chondroitin sulfate) serine glycan. Residues 62-73 are compositionally biased toward low complexity; the sequence is PSESKPSESNFS. Basic and acidic residues-rich tracts occupy residues 106–142, 214–231, 345–355, and 363–405; these read LNVDDADSTKNRKLTDEYDSTKSGLDRKVQDDPDGLH, APEKPTSRTENQDGKIPE, KLEKNTTDSKS, and EKSH…DEAK. Position 365 is a phosphoserine (Ser365).

In terms of assembly, interacts with CHGA. Interacts with secretogranin II/SCG2. Interacts (via C-terminus) with CPE. As to expression, expression restricted to the brain and pituitary gland. Not detected in the adrenal gland.

It is found in the cytoplasmic vesicle. Its subcellular location is the secretory vesicle. The protein resides in the secretory vesicle membrane. The protein localises to the secreted. Member of the granin protein family that regulates the biogenesis of secretory granules. Acts as a sorting receptor for intragranular proteins including chromogranin A/CHGA. May also play a role in angiogenesis. Promotes endothelial proliferation, migration and tube formation through MEK/ERK signaling pathway. The polypeptide is Secretogranin-3 (Scg3) (Rattus norvegicus (Rat)).